We begin with the raw amino-acid sequence, 160 residues long: Large ribosomal subunit protein uL22c (160 aa).

It belongs to the universal ribosomal protein uL22 family. Part of the 50S ribosomal subunit.

It is found in the plastid. The protein localises to the chloroplast. Its function is as follows. This protein binds specifically to 23S rRNA. In terms of biological role, the globular domain of the protein is located near the polypeptide exit tunnel on the outside of the subunit, while an extended beta-hairpin is found that lines the wall of the exit tunnel in the center of the 70S ribosome. This chain is Large ribosomal subunit protein uL22c (rpl22), found in Lepidium virginicum (Virginia pepperweed).